Reading from the N-terminus, the 954-residue chain is NKSKKRRNRVSFLGAATVEPPKPIPLTWKTEKPVWVNQWPLPKQKLEALHLLANEQLEKGHIEPSFSPWNSPVFVIQKKSGKWRMLTDLRAVNAVIQPMGPLQPGLPSPAMIPKDWPLIIIDLKDCFFTIPLAEQDCEKFAFTIPAINNKEPATRFQWKVLPQGMLNSPTICQTFVGRALQPVREKFSDCYIIHYIDDILCAAETKDKLIDCYTFLQAEVANAGLAIASDKIQTSTPFHYLGMQIENRKIKPQKIEIRKDTLKALNDFQKLLGDINWIRPTLGIPTYAMSNLFSILRGDSDLNSKRMLTPEATKEIKLVEEKIQSAQINRIDPLAPLQLLIFATAHSPTGIIIQNTDLVEWSFLPHSTVKTFTLYLDQIATLIGQTRLRIIKLCGNDPDKIVVPLTKEQVRQAFINSGAWQIGLANFVGIIDNHYPKTKIFQFLKLTTWILPKITRREPLENALTVFTDGSSNGKAAYTGPKERVIKTPYQSAQRAELVAVITVLQDFDINIISDSAYVVQATRDVETALIKYSMDDQLNQLFNLLQQTVRKRNFPFYITHIRAHTNLPGPLTKANKQADLLVSSALIKAQELHALTHVNAAGLKNKFDVTWKLAKDIVQHCTQCQVLHLPTQEAGVNPRGLCPNALWQMDVTHVPSFGRLSYVHVTVDTYSHFIWATCHTGESTSHVKKHLLSCFAVMGVPEKIKTDNGPGYCSKAFQKFLSQWKISHTTGIPYNSQGQAIVERTNRTLKTQLVKQKEGGDSKECTTPQMQLNLALYTLNFLNIYRNQTTTSAEQHLTGKKNSPHEGKLIWWKDNKNKTWEIGKVITWGRGFACVSPGENQLPVWIPTRHLKFYNEPIRDAKKSTSAETETPQSSTVDSQDEQNGDVRRTDEVAIHQEGRAANLGTTKEADAVSYKISREHKGDTNPREYAACSLDDCINGGKSPYACRSSCS.

Residues 57-245 (LEKGHIEPSF…TPFHYLGMQI (189 aa)) enclose the Reverse transcriptase domain. The LPQG signature appears at 161–164 (LPQG). A YXDD motif is present at residues 195–198 (YIDD). In terms of domain architecture, RNase H type-1 spans 460–588 (LENALTVFTD…ADLLVSSALI (129 aa)). Asp469, Glu497, Asp515, and Asp580 together coordinate Mg(2+). The Integrase-type zinc finger occupies 585–626 (SALIKAQELHALTHVNAAGLKNKFDVTWKLAKDIVQHCTQCQ). Zn(2+) is bound by residues His594, His598, Cys622, and Cys625. The region spanning 640–801 (RGLCPNALWQ…TSAEQHLTGK (162 aa)) is the Integrase catalytic domain. Residues 809–857 (KLIWWKDNKNKTWEIGKVITWGRGFACVSPGENQLPVWIPTRHLKFYNE) constitute a DNA-binding region (integrase-type). The tract at residues 862–888 (AKKSTSAETETPQSSTVDSQDEQNGDV) is disordered. The segment covering 867–879 (SAETETPQSSTVD) has biased composition (polar residues).

It belongs to the beta type-B retroviral polymerase family. HERV class-II K(HML-2) pol subfamily.

It carries out the reaction DNA(n) + a 2'-deoxyribonucleoside 5'-triphosphate = DNA(n+1) + diphosphate. It catalyses the reaction Endonucleolytic cleavage to 5'-phosphomonoester.. Its function is as follows. Early post-infection, the reverse transcriptase converts the viral RNA genome into double-stranded viral DNA. The RNase H domain of the reverse transcriptase performs two functions. It degrades the RNA template and specifically removes the RNA primer from the RNA/DNA hybrid. Following nuclear import, the integrase catalyzes the insertion of the linear, double-stranded viral DNA into the host cell chromosome. Endogenous Pol proteins may have kept, lost or modified their original function during evolution. The polypeptide is Endogenous retrovirus group K member 25 Pol protein (ERVK-25) (Homo sapiens (Human)).